The following is a 386-amino-acid chain: S-adenosylmethionine synthase (386 aa).

Residue H16 participates in ATP binding. Mg(2+) is bound at residue D18. E44 serves as a coordination point for K(+). E57 and Q100 together coordinate L-methionine. The tract at residues 100 to 110 is flexible loop; it reads QSPDINQGVDR. Residues 164 to 166, 230 to 231, D239, 245 to 246, A262, and K266 each bind ATP; these read DGK, KF, and RK. Position 239 (D239) interacts with L-methionine. K270 serves as a coordination point for L-methionine.

Belongs to the AdoMet synthase family. As to quaternary structure, homotetramer; dimer of dimers. Mg(2+) serves as cofactor. K(+) is required as a cofactor.

The protein resides in the cytoplasm. The enzyme catalyses L-methionine + ATP + H2O = S-adenosyl-L-methionine + phosphate + diphosphate. It functions in the pathway amino-acid biosynthesis; S-adenosyl-L-methionine biosynthesis; S-adenosyl-L-methionine from L-methionine: step 1/1. In terms of biological role, catalyzes the formation of S-adenosylmethionine (AdoMet) from methionine and ATP. The overall synthetic reaction is composed of two sequential steps, AdoMet formation and the subsequent tripolyphosphate hydrolysis which occurs prior to release of AdoMet from the enzyme. The protein is S-adenosylmethionine synthase of Helicobacter hepaticus (strain ATCC 51449 / 3B1).